We begin with the raw amino-acid sequence, 132 residues long: NAD(P)H-quinone oxidoreductase subunit 3 (132 aa).

3 consecutive transmembrane segments (helical) span residues 22–42 (FLGF…ASAL), 76–96 (MFAL…PWAV), and 101–121 (LGLL…VALV).

The protein belongs to the complex I subunit 3 family. In terms of assembly, NDH-1 can be composed of about 15 different subunits; different subcomplexes with different compositions have been identified which probably have different functions.

The protein resides in the cellular thylakoid membrane. It catalyses the reaction a plastoquinone + NADH + (n+1) H(+)(in) = a plastoquinol + NAD(+) + n H(+)(out). The enzyme catalyses a plastoquinone + NADPH + (n+1) H(+)(in) = a plastoquinol + NADP(+) + n H(+)(out). NDH-1 shuttles electrons from an unknown electron donor, via FMN and iron-sulfur (Fe-S) centers, to quinones in the respiratory and/or the photosynthetic chain. The immediate electron acceptor for the enzyme in this species is believed to be plastoquinone. Couples the redox reaction to proton translocation, and thus conserves the redox energy in a proton gradient. Cyanobacterial NDH-1 also plays a role in inorganic carbon-concentration. In Thermosynechococcus vestitus (strain NIES-2133 / IAM M-273 / BP-1), this protein is NAD(P)H-quinone oxidoreductase subunit 3 (ndhC).